We begin with the raw amino-acid sequence, 241 residues long: 2-C-methyl-D-erythritol 4-phosphate cytidylyltransferase (241 aa).

Belongs to the IspD/TarI cytidylyltransferase family. IspD subfamily.

The catalysed reaction is 2-C-methyl-D-erythritol 4-phosphate + CTP + H(+) = 4-CDP-2-C-methyl-D-erythritol + diphosphate. It participates in isoprenoid biosynthesis; isopentenyl diphosphate biosynthesis via DXP pathway; isopentenyl diphosphate from 1-deoxy-D-xylulose 5-phosphate: step 2/6. Its function is as follows. Catalyzes the formation of 4-diphosphocytidyl-2-C-methyl-D-erythritol from CTP and 2-C-methyl-D-erythritol 4-phosphate (MEP). This chain is 2-C-methyl-D-erythritol 4-phosphate cytidylyltransferase, found in Shewanella denitrificans (strain OS217 / ATCC BAA-1090 / DSM 15013).